Reading from the N-terminus, the 391-residue chain is Ferrochelatase (391 aa).

Residues His196 and Glu281 each coordinate Fe cation.

It belongs to the ferrochelatase family.

The protein resides in the cytoplasm. The catalysed reaction is heme b + 2 H(+) = protoporphyrin IX + Fe(2+). It functions in the pathway porphyrin-containing compound metabolism; protoheme biosynthesis; protoheme from protoporphyrin-IX: step 1/1. Functionally, catalyzes the ferrous insertion into protoporphyrin IX. The sequence is that of Ferrochelatase from Prochlorococcus marinus subsp. pastoris (strain CCMP1986 / NIES-2087 / MED4).